A 298-amino-acid chain; its full sequence is Bifunctional protein FolD (298 aa).

NADP(+)-binding positions include 165–167 (GRS), serine 190, and isoleucine 231.

This sequence belongs to the tetrahydrofolate dehydrogenase/cyclohydrolase family. As to quaternary structure, homodimer.

The enzyme catalyses (6R)-5,10-methylene-5,6,7,8-tetrahydrofolate + NADP(+) = (6R)-5,10-methenyltetrahydrofolate + NADPH. It carries out the reaction (6R)-5,10-methenyltetrahydrofolate + H2O = (6R)-10-formyltetrahydrofolate + H(+). The protein operates within one-carbon metabolism; tetrahydrofolate interconversion. Its function is as follows. Catalyzes the oxidation of 5,10-methylenetetrahydrofolate to 5,10-methenyltetrahydrofolate and then the hydrolysis of 5,10-methenyltetrahydrofolate to 10-formyltetrahydrofolate. The polypeptide is Bifunctional protein FolD (Prochlorococcus marinus (strain MIT 9312)).